A 177-amino-acid chain; its full sequence is Large ribosomal subunit protein uL6 (177 aa).

As to quaternary structure, part of the 50S ribosomal subunit.

This protein binds to the 23S rRNA, and is important in its secondary structure. It is located near the subunit interface in the base of the L7/L12 stalk, and near the tRNA binding site of the peptidyltransferase center. This Rhodopseudomonas palustris (strain ATCC BAA-98 / CGA009) protein is Large ribosomal subunit protein uL6.